We begin with the raw amino-acid sequence, 280 residues long: BURP domain protein USPL1 (280 aa).

The first 24 residues, 1–24 (MASTFRLSISFLTLILFSLWVVEA), serve as a signal peptide directing secretion. The region spanning 58–280 (YFTLNDLKLG…PLDNIVWVTK (223 aa)) is the BURP domain.

In terms of tissue distribution, expressed in cotyledons, radicle, floral buds, open flowers, roots and developing seeds, but not in leaves. Highly expressed in the root tips. Detected in young leaves, hypocotyls, stems and mature seed funiculum.

The protein localises to the protein storage vacuole. It is found in the golgi apparatus. Its subcellular location is the golgi stack. The protein resides in the trans-Golgi network. It localises to the prevacuolar compartment. Associated with the protein storage vacuole formation. This chain is BURP domain protein USPL1, found in Arabidopsis thaliana (Mouse-ear cress).